Here is a 67-residue protein sequence, read N- to C-terminus: Large ribosomal subunit protein uL29 (67 aa).

The protein belongs to the universal ribosomal protein uL29 family.

The protein is Large ribosomal subunit protein uL29 of Heliobacterium modesticaldum (strain ATCC 51547 / Ice1).